Reading from the N-terminus, the 112-residue chain is Nitrogen regulatory protein GlnK1 (112 aa).

An ADP-binding site is contributed by threonine 29. 2 residues coordinate ATP: threonine 29 and valine 38. 52–54 (IVD) serves as a coordination point for 2-oxoglutarate. Residues valine 64, 88-90 (DGK), and 101-103 (RVR) each bind ADP. Residues valine 64, 86-90 (PGDGK), and 101-103 (RVR) contribute to the ATP site.

The protein belongs to the P(II) protein family. Homotrimer. Interacts and forms a complex with Amt1.

The protein localises to the cytoplasm. Its activity is regulated as follows. Formation of the GlnK1/Amt1 complex is decreased in the presence of Mg-ATP or 2-oxoglutarate. The presence of both effectors abolishes the formation of the complex. Involved in the regulation of nitrogen metabolism. Regulates the activity of its targets by protein-protein interaction in response to the nitrogen status of the cell. Regulates the activity of the ammonia channel Amt1 via direct interaction. The sequence is that of Nitrogen regulatory protein GlnK1 from Methanocaldococcus jannaschii (strain ATCC 43067 / DSM 2661 / JAL-1 / JCM 10045 / NBRC 100440) (Methanococcus jannaschii).